A 1159-amino-acid chain; its full sequence is WASH complex subunit 5 (1159 aa).

Ser917 is subject to Phosphoserine.

This sequence belongs to the strumpellin family. In terms of assembly, component of the WASH core complex also described as WASH regulatory complex (SHRC) composed of WASH (WASHC1, WASH2P or WASH3P), WASHC2 (WASHC2A or WASHC2C), WASHC3, WASHC4 and WASHC5. The WASH core complex associates via WASHC2 with the F-actin-capping protein dimer (formed by CAPZA1, CAPZA2 or CAPZA3 and CAPZB) in a transient or substoichiometric manner which was initially described as WASH complex. Interacts with VCP, PI4K2A.

Its subcellular location is the cytoplasm. It localises to the cytosol. The protein localises to the endoplasmic reticulum. The protein resides in the early endosome. Functionally, acts as a component of the WASH core complex that functions as a nucleation-promoting factor (NPF) at the surface of endosomes, where it recruits and activates the Arp2/3 complex to induce actin polymerization, playing a key role in the fission of tubules that serve as transport intermediates during endosome sorting. May be involved in axonal outgrowth. Involved in cellular localization of ADRB2. Involved in cellular trafficking of BLOC-1 complex cargos such as ATP7A and VAMP7. This Pongo abelii (Sumatran orangutan) protein is WASH complex subunit 5.